Reading from the N-terminus, the 247-residue chain is Neurotrophic factor BDNF precursor form (247 aa).

The first 18 residues, 1 to 18 (MTILFLTMVISYFGCMKA), serve as a signal peptide directing secretion. The propeptide occupies 19–128 (APMKEANVRG…AANMSMRVRR (110 aa)). An N-linked (GlcNAc...) asparagine glycan is attached at asparagine 121. 3 cysteine pairs are disulfide-bonded: cysteine 141–cysteine 208, cysteine 186–cysteine 237, and cysteine 196–cysteine 239.

Belongs to the NGF-beta family. As to quaternary structure, monomers and homodimers. Binds to NTRK2/TRKB. Can form heterodimers with other neurotrophin family members, such as NTF3 and NTF4 (in vitro), but the physiological relevance of this is not clear. BDNF precursor form: interacts with the heterodimer formed by NGFR and SORCS2. Mature BDNF has much lower affinity for the heterodimer formed by NGFR and SORCS2. Post-translationally, N-glycosylated and glycosulfated, contrary to mature BDNF. Mature BDNF is produced by proteolytic removal of the propeptide, catalyzed by a FURIN family member. In addition, the precursor form is proteolytically cleaved within the propeptide, but this is not an obligatory intermediate for the production of mature BDNF. Can be converted into mature BDNF by plasmin (PLG).

It is found in the secreted. Its function is as follows. Important signaling molecule that activates signaling cascades downstream of NTRK2. During development, promotes the survival and differentiation of selected neuronal populations of the peripheral and central nervous systems. Participates in axonal growth, pathfinding and in the modulation of dendritic growth and morphology. Major regulator of synaptic transmission and plasticity at adult synapses in many regions of the CNS. The versatility of BDNF is emphasized by its contribution to a range of adaptive neuronal responses including long-term potentiation (LTP), long-term depression (LTD), certain forms of short-term synaptic plasticity, as well as homeostatic regulation of intrinsic neuronal excitability. Important signaling molecule that activates signaling cascades downstream of NTRK2. Activates signaling cascades via the heterodimeric receptor formed by NGFR and SORCS2. Signaling via NGFR and SORCS2 plays a role in synaptic plasticity and long-term depression (LTD). Binding to NGFR and SORCS2 promotes neuronal apoptosis. Promotes neuronal growth cone collapse. This chain is Neurotrophic factor BDNF precursor form (BDNF), found in Helarctos malayanus (Malayan sun bear).